The chain runs to 34 residues: Conotoxin de13a (34 aa).

2 positions are modified to 4-hydroxyproline: proline 3 and proline 7. Tryptophan 14 is subject to 6'-bromotryptophan. 5-hydroxylysine is present on lysine 18. Proline 21 is subject to 4-hydroxyproline. Lysine 25 bears the 5-hydroxylysine mark. The residue at position 32 (histidine 32) is a Histidine amide.

Post-translationally, contains 4 disulfide bonds. The diastereomeric form of 5-hydroxylysine found was not conclusively established, but it is probably 5R. Expressed by the venom duct.

The protein resides in the secreted. This chain is Conotoxin de13a, found in Conasprella delessertii (Sozon's cone).